The chain runs to 216 residues: Protein fmp32, mitochondrial (216 aa).

A coiled-coil region spans residues 111 to 133 (RQEMVALHSQVEQLFSDVERLKT). The helical transmembrane segment at 193 to 215 (TLQWVFGIVTGSGALLLAYVRLI) threads the bilayer.

It belongs to the CCDC90 family.

The protein localises to the mitochondrion. The protein resides in the membrane. The polypeptide is Protein fmp32, mitochondrial (fmp32) (Schizosaccharomyces pombe (strain 972 / ATCC 24843) (Fission yeast)).